Reading from the N-terminus, the 358-residue chain is MSALTIPAARRTLNNAPIIDAANGKTPTRTPVWFMRQAGRSLPEYKKVREGISMLDSCFMPELLAEITLQPVRRHDVDAAILFSDIVVPLRAAGVGVEIVAGRGPVLDAPVRSRGDVLNLPILEGNVPEVEQGIGIILDELSDSQALIGFAGAPFTLASYLVEGGPSKNHEKTKAMMHGDPETWHALMARLVPTIVNSLKSQIDAGIDAVQLFDSWAGFLTERDYTEFVLPYSTEILEEVGKYQLPRIHFGVGTGELLGAMSKAGSEVMGVDWRVPLDKAAERIAAVSGPKVLQGNLDPALLFAGRAPLTKEIERIKAEAQTAVDAGHATGHIFNLGHGVLPNTVAEDITEAVSIIHS.

Residues 36-40 (RQAGR), aspartate 85, tyrosine 160, serine 215, and histidine 338 contribute to the substrate site.

It belongs to the uroporphyrinogen decarboxylase family. Homodimer.

The protein localises to the cytoplasm. The catalysed reaction is uroporphyrinogen III + 4 H(+) = coproporphyrinogen III + 4 CO2. The protein operates within porphyrin-containing compound metabolism; protoporphyrin-IX biosynthesis; coproporphyrinogen-III from 5-aminolevulinate: step 4/4. Catalyzes the decarboxylation of four acetate groups of uroporphyrinogen-III to yield coproporphyrinogen-III. In Corynebacterium glutamicum (strain ATCC 13032 / DSM 20300 / JCM 1318 / BCRC 11384 / CCUG 27702 / LMG 3730 / NBRC 12168 / NCIMB 10025 / NRRL B-2784 / 534), this protein is Uroporphyrinogen decarboxylase.